Consider the following 186-residue polypeptide: Archaemetzincin (186 aa).

Histidine 136 provides a ligand contact to Zn(2+). Catalysis depends on glutamate 137, which acts as the Proton acceptor. Zn(2+) contacts are provided by histidine 140, histidine 146, cysteine 147, cysteine 152, cysteine 171, and cysteine 174.

The protein belongs to the peptidase M54 family. As to quaternary structure, monomer. Zn(2+) serves as cofactor.

Probable zinc metalloprotease whose natural substrate is unknown. This Thermococcus kodakarensis (strain ATCC BAA-918 / JCM 12380 / KOD1) (Pyrococcus kodakaraensis (strain KOD1)) protein is Archaemetzincin.